Here is a 289-residue protein sequence, read N- to C-terminus: Acetylglutamate kinase (289 aa).

Residues 60 to 61, R82, and N182 each bind substrate; that span reads GG.

Belongs to the acetylglutamate kinase family. ArgB subfamily.

Its subcellular location is the cytoplasm. The enzyme catalyses N-acetyl-L-glutamate + ATP = N-acetyl-L-glutamyl 5-phosphate + ADP. The protein operates within amino-acid biosynthesis; L-arginine biosynthesis; N(2)-acetyl-L-ornithine from L-glutamate: step 2/4. Functionally, catalyzes the ATP-dependent phosphorylation of N-acetyl-L-glutamate. This is Acetylglutamate kinase from Methanothrix thermoacetophila (strain DSM 6194 / JCM 14653 / NBRC 101360 / PT) (Methanosaeta thermophila).